We begin with the raw amino-acid sequence, 273 residues long: Cell wall mannoprotein 1 (273 aa).

The first 17 residues, 1-17 (MRFSAIFTLGLAGTALA), serve as a signal peptide directing secretion. The segment at 173 to 247 (DVSDSAPSSS…GSASATSPPL (75 aa)) is disordered. Residues 177-247 (SAPSSSAGSS…GSASATSPPL (71 aa)) show a composition bias toward low complexity.

Belongs to the cell wall mannoprotein 1 family. Post-translationally, galactomannoprotein, glycosylated.

It is found in the secreted. The protein resides in the cell wall. Its function is as follows. Constitutive protein of the cell wall. Antigen target of host humoral immune response. The polypeptide is Cell wall mannoprotein 1 (Aspergillus flavus).